The following is a 90-amino-acid chain: FMRFamide-like neuropeptides 27 (90 aa).

The signal sequence occupies residues 1 to 24; the sequence is MFSFRKFLAFMLIVIALMASFSSA. The propeptide occupies 25-36; it reads QPIDEERPIFME. Phe-61 carries the post-translational modification Phenylalanine amide. The propeptide occupies 65 to 90; the sequence is SSSPSDISMAELRAIYGGGPVEYVQL.

Belongs to the FARP (FMRFamide related peptide) family.

The protein localises to the secreted. Functionally, FMRFamides and FMRFamide-like peptides are neuropeptides. This is FMRFamide-like neuropeptides 27 from Caenorhabditis briggsae.